A 421-amino-acid chain; its full sequence is Serine hydroxymethyltransferase (421 aa).

(6S)-5,6,7,8-tetrahydrofolate is bound by residues leucine 123 and 127–129 (GHL). Position 232 is an N6-(pyridoxal phosphate)lysine (lysine 232).

This sequence belongs to the SHMT family. As to quaternary structure, homodimer. Pyridoxal 5'-phosphate is required as a cofactor.

It is found in the cytoplasm. It carries out the reaction (6R)-5,10-methylene-5,6,7,8-tetrahydrofolate + glycine + H2O = (6S)-5,6,7,8-tetrahydrofolate + L-serine. Its pathway is one-carbon metabolism; tetrahydrofolate interconversion. The protein operates within amino-acid biosynthesis; glycine biosynthesis; glycine from L-serine: step 1/1. Catalyzes the reversible interconversion of serine and glycine with tetrahydrofolate (THF) serving as the one-carbon carrier. This reaction serves as the major source of one-carbon groups required for the biosynthesis of purines, thymidylate, methionine, and other important biomolecules. Also exhibits THF-independent aldolase activity toward beta-hydroxyamino acids, producing glycine and aldehydes, via a retro-aldol mechanism. The sequence is that of Serine hydroxymethyltransferase from Ehrlichia canis (strain Jake).